A 197-amino-acid polypeptide reads, in one-letter code: MYVPMVVEQSGRGERAYDIYSRLLKERIVFLGGEINDQVADLVIAQLLFLEAEDPDKDIHLYINSPGGVVTAGMAIFDTMNYIKAPVSTICIGQAASMGAVLLTAGEKGKRFALPHARIMIHQPSGGSRGQATDIMIQAEEILRMKRELNRLLADLSGQPVERLEQDTERDFFMSAEEARNYGLIDAVMTRRPDGGD.

Serine 97 acts as the Nucleophile in catalysis. The active site involves histidine 122.

It belongs to the peptidase S14 family. Fourteen ClpP subunits assemble into 2 heptameric rings which stack back to back to give a disk-like structure with a central cavity, resembling the structure of eukaryotic proteasomes.

The protein resides in the cytoplasm. It carries out the reaction Hydrolysis of proteins to small peptides in the presence of ATP and magnesium. alpha-casein is the usual test substrate. In the absence of ATP, only oligopeptides shorter than five residues are hydrolyzed (such as succinyl-Leu-Tyr-|-NHMec, and Leu-Tyr-Leu-|-Tyr-Trp, in which cleavage of the -Tyr-|-Leu- and -Tyr-|-Trp bonds also occurs).. In terms of biological role, cleaves peptides in various proteins in a process that requires ATP hydrolysis. Has a chymotrypsin-like activity. Plays a major role in the degradation of misfolded proteins. The polypeptide is ATP-dependent Clp protease proteolytic subunit (Trichlorobacter lovleyi (strain ATCC BAA-1151 / DSM 17278 / SZ) (Geobacter lovleyi)).